Here is a 220-residue protein sequence, read N- to C-terminus: Deoxyribose-phosphate aldolase (220 aa).

Catalysis depends on D89, which acts as the Proton donor/acceptor. K151 (schiff-base intermediate with acetaldehyde) is an active-site residue. The Proton donor/acceptor role is filled by K180.

The protein belongs to the DeoC/FbaB aldolase family. DeoC type 1 subfamily.

The protein resides in the cytoplasm. The catalysed reaction is 2-deoxy-D-ribose 5-phosphate = D-glyceraldehyde 3-phosphate + acetaldehyde. It functions in the pathway carbohydrate degradation; 2-deoxy-D-ribose 1-phosphate degradation; D-glyceraldehyde 3-phosphate and acetaldehyde from 2-deoxy-alpha-D-ribose 1-phosphate: step 2/2. Its function is as follows. Catalyzes a reversible aldol reaction between acetaldehyde and D-glyceraldehyde 3-phosphate to generate 2-deoxy-D-ribose 5-phosphate. The sequence is that of Deoxyribose-phosphate aldolase from Streptococcus pneumoniae (strain Taiwan19F-14).